A 321-amino-acid chain; its full sequence is MLEEDAAGPDQLGPNDLDRQIEIAMRCELICETQVKSICAKVREILIEEANVQVIDTPVTICGDIHGQFHDLMELFRVGGSPPNTNYLFLGDYVDRGYNSVETFILLMLLKCRYPDRITLIRGNHESRQITQVYGFYDECVRKYGSGQVWKHCTEIFDYLSLAAVIDGKLFCVHGGLSPSIATLDQIRVLDRKIEVPHEGPMCDLLWSDPEEGCSGWGISPRGAGYLFGGDAAELFCENNDFLRICRAHQLVMEGYKLHFRKRVVTVWSAPNYCYRCGNVAAIMEVTEENIDSDPVFEVFEAATVENRGEPKKQPIAQYFL.

D64, H66, D92, and N124 together coordinate Mn(2+). Residue H125 is the Proton donor of the active site. Residues H174 and H249 each contribute to the Mn(2+) site.

Belongs to the PPP phosphatase family. PP-4 (PP-X) subfamily. In terms of assembly, serine/threonine-protein phosphatase 4 (PP4) occurs in different assemblies of the catalytic and one or more regulatory subunits. Mn(2+) serves as cofactor.

It catalyses the reaction O-phospho-L-seryl-[protein] + H2O = L-seryl-[protein] + phosphate. It carries out the reaction O-phospho-L-threonyl-[protein] + H2O = L-threonyl-[protein] + phosphate. In terms of biological role, protein phosphatase which seems to be involved in larval development but not essential for embryogenesis. The protein is Serine/threonine-protein phosphatase 4 catalytic subunit 2 of Caenorhabditis elegans.